Reading from the N-terminus, the 141-residue chain is MTKTAKVNDIVRDWVVLDAKDKVFGRLITEIAVLLRGKHRPFYTPNVDCGDFVVVINANKVKFSGMKLEDKEYFTHSGYFGSTKSKTLQEMLEKAPEKLYHLAVRGMLPKTKLGKAMIKKLKVYRDDKHPHTAQTSKKDAK.

The protein belongs to the universal ribosomal protein uL13 family. In terms of assembly, part of the 50S ribosomal subunit.

Its function is as follows. This protein is one of the early assembly proteins of the 50S ribosomal subunit, although it is not seen to bind rRNA by itself. It is important during the early stages of 50S assembly. This Helicobacter pylori (strain P12) protein is Large ribosomal subunit protein uL13.